The sequence spans 327 residues: Elongation factor P--(R)-beta-lysine ligase (327 aa).

78–80 (SPE) is a substrate binding site. ATP-binding positions include 102–104 (RNQ) and asparagine 111. Tyrosine 120 provides a ligand contact to substrate. Position 246–247 (246–247 (EL)) interacts with ATP. Glutamate 253 serves as a coordination point for substrate. Residue glycine 302 participates in ATP binding.

The protein belongs to the class-II aminoacyl-tRNA synthetase family. EpmA subfamily. As to quaternary structure, homodimer.

It carries out the reaction D-beta-lysine + L-lysyl-[protein] + ATP = N(6)-((3R)-3,6-diaminohexanoyl)-L-lysyl-[protein] + AMP + diphosphate + H(+). Its function is as follows. With EpmB is involved in the beta-lysylation step of the post-translational modification of translation elongation factor P (EF-P). Catalyzes the ATP-dependent activation of (R)-beta-lysine produced by EpmB, forming a lysyl-adenylate, from which the beta-lysyl moiety is then transferred to the epsilon-amino group of a conserved specific lysine residue in EF-P. This Baumannia cicadellinicola subsp. Homalodisca coagulata protein is Elongation factor P--(R)-beta-lysine ligase.